The following is a 312-amino-acid chain: MKWSEISIHTTHEAVEAISNILHEAGAGGVVIEDPYDLVKERDDWYGEIVELNPDDYPEEGVIIKAYLPVNSFLGETVEQIKQAINNLWLYDIDLGKNKITLSEVNEEEWATAWKKHYHPVKVSEKFTIVPTWETYEPASRDELIIEMDPGMAFGTGTHPTTVMCLQALEKYVRPGDHVIDVGTGSGILSIAAAMLGAQSVRALDLDPVAVDSARLNVKLNKVQHIVTVSQNNLLDHIEEPADVIVANILAEIILRFTGDAYRLLKPGGRFITSGIIQAKKQDVKDGLLAAGFAIEEINVMEDWVAVVALKP.

T162, G183, D205, and N248 together coordinate S-adenosyl-L-methionine.

It belongs to the methyltransferase superfamily. PrmA family.

It is found in the cytoplasm. The enzyme catalyses L-lysyl-[protein] + 3 S-adenosyl-L-methionine = N(6),N(6),N(6)-trimethyl-L-lysyl-[protein] + 3 S-adenosyl-L-homocysteine + 3 H(+). Functionally, methylates ribosomal protein L11. The sequence is that of Ribosomal protein L11 methyltransferase from Geobacillus kaustophilus (strain HTA426).